Reading from the N-terminus, the 461-residue chain is Pancreatic triacylglycerol lipase (461 aa).

The first 12 residues, 1 to 12 (WTLSLLLGAVVG), serve as a signal peptide directing secretion. 2 cysteine pairs are disulfide-bonded: C16/C22 and C103/C114. S165 functions as the Nucleophile in the catalytic mechanism. D189 functions as the Charge relay system in the catalytic mechanism. Residues E200, R203, D205, and D208 each coordinate Ca(2+). A disulfide bridge connects residues C250 and C274. H276 functions as the Charge relay system in the catalytic mechanism. 3 cysteine pairs are disulfide-bonded: C298–C309, C312–C317, and C445–C461. The 111-residue stretch at 351 to 461 (WRYRVDVTLS…EDVLLTLTAC (111 aa)) folds into the PLAT domain.

This sequence belongs to the AB hydrolase superfamily. Lipase family. As to quaternary structure, forms a 1:1 stoichiometric complex with (pro)colipase/CLPS.

Its subcellular location is the secreted. It carries out the reaction a triacylglycerol + H2O = a diacylglycerol + a fatty acid + H(+). The catalysed reaction is 1,2,3-tributanoylglycerol + H2O = dibutanoylglycerol + butanoate + H(+). It catalyses the reaction 1,2,3-tri-(9Z-octadecenoyl)-glycerol + H2O = di-(9Z)-octadecenoylglycerol + (9Z)-octadecenoate + H(+). The enzyme catalyses all-trans-retinyl hexadecanoate + H2O = all-trans-retinol + hexadecanoate + H(+). It carries out the reaction 1,2-di-(9Z-octadecenoyl)-glycerol + H2O = (9Z-octadecenoyl)-glycerol + (9Z)-octadecenoate + H(+). With respect to regulation, inhibited by bile salts, is reactivated by (pro)colipase/CLPS. In terms of biological role, plays an important role in fat metabolism. It preferentially splits the esters of long-chain fatty acids at positions 1 and 3, producing mainly 2-monoacylglycerol and free fatty acids, and shows considerably higher activity against insoluble emulsified substrates than against soluble ones. The chain is Pancreatic triacylglycerol lipase (PNLIP) from Equus caballus (Horse).